The chain runs to 481 residues: Tripartite motif-containing protein 10 (481 aa).

The RING-type zinc finger occupies 16-61 (CPICQGTLREPVTIDCGHNFCRACLTRYCEIPGPDLEESPTCPLCK). The B box-type zinc finger occupies 94 to 135 (GEEDVCQEHGEKIYFFCEDDEMQLCVVCREAGEHATHTMRFL). Positions 99, 102, 121, and 127 each coordinate Zn(2+). The stretch at 142 to 177 (YREQIHKCLKRLRKEREETQEIQSRENKRMQVLLTQ) forms a coiled coil. The region spanning 292–481 (REMKMFLEKL…GRGSSFFLSS (190 aa)) is the B30.2/SPRY domain.

It belongs to the TRIM/RBCC family. Interacts with IFNAR1; this interaction prevents association of IFNAR1 with TYK2.

It is found in the cytoplasm. E3 ligase that plays an essential role in the differentiation and survival of terminal erythroid cells. May directly bind to PTEN and promote its ubiquitination, resulting in its proteasomal degradation and activation of hypertrophic signaling. In addition, plays a role in immune response regulation by repressing the phosphorylation of STAT1 and STAT2 in the interferon/JAK/STAT signaling pathway independent of its E3 ligase activity. Mechanistically, interacts with the intracellular domain of IFNAR1 and thereby inhibits the association of TYK2 and IFNAR1. This Pan troglodytes (Chimpanzee) protein is Tripartite motif-containing protein 10 (TRIM10).